The primary structure comprises 431 residues: L-cysteine:1D-myo-inositol 2-amino-2-deoxy-alpha-D-glucopyranoside ligase (431 aa).

Cys-44 is a binding site for Zn(2+). L-cysteinyl-5'-AMP contacts are provided by residues 44–47 (CGIT), Thr-59, and 82–84 (NVT). A 'HIGH' region motif is present at residues 46–56 (ITPYDATHLGH). A 'ERGGDP' region motif is present at residues 187-192 (ERGGDP). Trp-227 provides a ligand contact to L-cysteinyl-5'-AMP. Residue Cys-231 participates in Zn(2+) binding. 249–251 (GND) is an L-cysteinyl-5'-AMP binding site. His-256 is a binding site for Zn(2+). Ile-283 lines the L-cysteinyl-5'-AMP pocket. The 'KMSKS' region motif lies at 289-293 (KMSKS).

The protein belongs to the class-I aminoacyl-tRNA synthetase family. MshC subfamily. As to quaternary structure, monomer. Requires Zn(2+) as cofactor.

It carries out the reaction 1D-myo-inositol 2-amino-2-deoxy-alpha-D-glucopyranoside + L-cysteine + ATP = 1D-myo-inositol 2-(L-cysteinylamino)-2-deoxy-alpha-D-glucopyranoside + AMP + diphosphate + H(+). Its function is as follows. Catalyzes the ATP-dependent condensation of GlcN-Ins and L-cysteine to form L-Cys-GlcN-Ins. This Stackebrandtia nassauensis (strain DSM 44728 / CIP 108903 / NRRL B-16338 / NBRC 102104 / LLR-40K-21) protein is L-cysteine:1D-myo-inositol 2-amino-2-deoxy-alpha-D-glucopyranoside ligase.